We begin with the raw amino-acid sequence, 117 residues long: Large ribosomal subunit protein uL18 (117 aa).

It belongs to the universal ribosomal protein uL18 family. In terms of assembly, part of the 50S ribosomal subunit; part of the 5S rRNA/L5/L18/L25 subcomplex. Contacts the 5S and 23S rRNAs.

Functionally, this is one of the proteins that bind and probably mediate the attachment of the 5S RNA into the large ribosomal subunit, where it forms part of the central protuberance. The sequence is that of Large ribosomal subunit protein uL18 from Methylobacillus flagellatus (strain ATCC 51484 / DSM 6875 / VKM B-1610 / KT).